Here is a 279-residue protein sequence, read N- to C-terminus: 3-methyl-2-oxobutanoate hydroxymethyltransferase (279 aa).

Residues Asp43 and Asp82 each contribute to the Mg(2+) site. Residues 43-44 (DS), Asp82, and Lys112 each bind 3-methyl-2-oxobutanoate. Mg(2+) is bound at residue Glu114. Catalysis depends on Glu181, which acts as the Proton acceptor.

This sequence belongs to the PanB family. As to quaternary structure, homodecamer; pentamer of dimers. The cofactor is Mg(2+).

It localises to the cytoplasm. It catalyses the reaction 3-methyl-2-oxobutanoate + (6R)-5,10-methylene-5,6,7,8-tetrahydrofolate + H2O = 2-dehydropantoate + (6S)-5,6,7,8-tetrahydrofolate. The protein operates within cofactor biosynthesis; (R)-pantothenate biosynthesis; (R)-pantoate from 3-methyl-2-oxobutanoate: step 1/2. Functionally, catalyzes the reversible reaction in which hydroxymethyl group from 5,10-methylenetetrahydrofolate is transferred onto alpha-ketoisovalerate to form ketopantoate. The chain is 3-methyl-2-oxobutanoate hydroxymethyltransferase from Shouchella clausii (strain KSM-K16) (Alkalihalobacillus clausii).